Here is a 251-residue protein sequence, read N- to C-terminus: Probable transcriptional regulatory protein Caul_0780 (251 aa).

Belongs to the TACO1 family.

It is found in the cytoplasm. The polypeptide is Probable transcriptional regulatory protein Caul_0780 (Caulobacter sp. (strain K31)).